The following is a 302-amino-acid chain: Rab effector Noc2 (302 aa).

One can recognise a RabBD domain in the interval 41–158 (QRRSQCLSPG…KRSGAWFYKG (118 aa)). The FYVE-type zinc finger occupies 89-146 (GNGLSQCLLCGEVLGFLGSSSVFCKDCRKKVCTKCGIEASPGQKRPLWLCKICSEQRE). The Zn(2+) site is built by Cys-95, Cys-98, Cys-112, Cys-115, Cys-120, Cys-123, Cys-138, and Cys-141. A disordered region spans residues 174–302 (DPHFRPLPVE…KRHTWATPRY (129 aa)). A compositionally biased stretch (polar residues) spans 185–197 (TETQPPSAETSRV). Ser-248 carries the post-translational modification Phosphoserine. Positions 258-269 (SHLSGSQSSLGS) are enriched in low complexity.

As to quaternary structure, recruited to dense-core vesicles through specific interaction with RAB27A in endocrine cells. Interacts with RAB3A, RAB3B, RAB3C and RAB3D. Interacts with ZYX. As to expression, highly expressed in pancreatic islets. High to moderate expression in adrenal gland, pituitary gland and ovary.

Its subcellular location is the cytoplasm. It is found in the cytoplasmic vesicle. The protein resides in the secretory vesicle membrane. Rab GTPase effector involved in the late steps of regulated exocytosis, both in endocrine and exocrine cells. Regulates the exocytosis of dense-core vesicles in neuroendocrine cells through interaction with RAB27A. Acts as a potential RAB3B effector protein in epithelial cells. The polypeptide is Rab effector Noc2 (Rph3al) (Mus musculus (Mouse)).